A 255-amino-acid chain; its full sequence is Small ribosomal subunit protein eS1 (255 aa).

Residues Met1 to Lys18 show a composition bias toward basic residues. Positions Met1–Asp28 are disordered. Position 2 is an N-acetylalanine; partial (Ala2). Residues Arg19 to Asp28 are compositionally biased toward basic and acidic residues.

This sequence belongs to the eukaryotic ribosomal protein eS1 family. Component of the small ribosomal subunit. Mature ribosomes consist of a small (40S) and a large (60S) subunit. The 40S subunit contains about 33 different proteins and 1 molecule of RNA (18S). The 60S subunit contains about 49 different proteins and 3 molecules of RNA (25S, 5.8S and 5S).

The protein localises to the cytoplasm. The chain is Small ribosomal subunit protein eS1 from Paracoccidioides lutzii (strain ATCC MYA-826 / Pb01) (Paracoccidioides brasiliensis).